The sequence spans 277 residues: Hematopoietically-expressed homeobox protein HHEX (277 aa).

Disordered regions lie at residues 47–69 and 199–277; these read AAPA…NSSF and WRRL…SATR. Pro residues predominate over residues 52–63; that stretch reads HSLPAPPPPTLP. The segment at residues 144 to 203 is a DNA-binding region (homeobox); that stretch reads RKGGQVRFSNEQTIELEKKFETQKYLSPPERKRLAKLLQLSERQVKTWFQNRRAKWRRLK. Over residues 210-226 the composition is skewed to basic and acidic residues; sequence TKKEEAEGTGDHGDPRS. Residues 250–266 show a composition bias toward acidic residues; that stretch reads EDPESDVSDDSDQEVDI.

As to expression, in all hematopoietic tissues except peripheral blood erythrocytes and in the liver and lung.

It is found in the nucleus. Recognizes the DNA sequence 5'-ATTAA-3'. Transcriptional repressor. May play a role in hematopoietic differentiation. The protein is Hematopoietically-expressed homeobox protein HHEX (HHEX) of Gallus gallus (Chicken).